The sequence spans 254 residues: Probable phosphatase TTE1963 (254 aa).

Residues H14, H16, H22, H47, E80, H108, H139, D200, and H202 each contribute to the Zn(2+) site.

Belongs to the PHP family. It depends on Zn(2+) as a cofactor.

The sequence is that of Probable phosphatase TTE1963 from Caldanaerobacter subterraneus subsp. tengcongensis (strain DSM 15242 / JCM 11007 / NBRC 100824 / MB4) (Thermoanaerobacter tengcongensis).